Here is a 99-residue protein sequence, read N- to C-terminus: Putative membrane protein insertion efficiency factor (99 aa).

Belongs to the UPF0161 family.

The protein localises to the cell membrane. Its function is as follows. Could be involved in insertion of integral membrane proteins into the membrane. This chain is Putative membrane protein insertion efficiency factor, found in Corynebacterium efficiens (strain DSM 44549 / YS-314 / AJ 12310 / JCM 11189 / NBRC 100395).